The primary structure comprises 497 residues: Glycerol kinase (497 aa).

Thr12 lines the ADP pocket. Residues Thr12, Thr13, and Ser14 each contribute to the ATP site. Residue Thr12 coordinates sn-glycerol 3-phosphate. An ADP-binding site is contributed by Arg16. Residues Arg82, Glu83, Tyr134, and Asp243 each coordinate sn-glycerol 3-phosphate. Residues Arg82, Glu83, Tyr134, Asp243, and Gln244 each contribute to the glycerol site. Thr265 and Gly308 together coordinate ADP. ATP-binding residues include Thr265, Gly308, Gln312, and Gly409. ADP-binding residues include Gly409 and Asn413.

This sequence belongs to the FGGY kinase family.

It carries out the reaction glycerol + ATP = sn-glycerol 3-phosphate + ADP + H(+). It functions in the pathway polyol metabolism; glycerol degradation via glycerol kinase pathway; sn-glycerol 3-phosphate from glycerol: step 1/1. Inhibited by fructose 1,6-bisphosphate (FBP). In terms of biological role, key enzyme in the regulation of glycerol uptake and metabolism. Catalyzes the phosphorylation of glycerol to yield sn-glycerol 3-phosphate. In Solidesulfovibrio magneticus (strain ATCC 700980 / DSM 13731 / RS-1) (Desulfovibrio magneticus), this protein is Glycerol kinase.